Here is a 719-residue protein sequence, read N- to C-terminus: MKIIFNLLILFSLVNFINSQSTTQATTLKLEGTIYDQYPYYDNNFEPIAGSLTTRLVQNAINTTTRTPTLNTLLPFTTTNVMGRMVTPSLFQYFYQPNKNAPLTNNSGANFPIPMTVNLTLNPSTGTYVYDNQFFFPIDYQGFDTNPFYRNYTDGTDYHNFHFCLKINTRFTYTGNEVFYFVGDDDVWVFINDQLVIDLGGLHEAAGKNIDLTTLGLTKNKDYTFDFFYCERHTTKSTIRIETSIQAYCPFYDYCGVCYGDGSTCCDPVVNCNDGDLCTIDSCPPRDTIIPAGFSISDLCQHAPVSCPSIDMCTNNTCDSKSGQCTPTSIKCDDKSSQCLTLKPCDPSSGCLYTSSCTSAHNPCNTGACSNGQCQTKSNSTCAAELGNDPCKVYYCDINSGCVSQPLCKQGPDSCEQNVCNAGVCTIKKLDPSVCSCGCVLNKCQKNNCVTASNGTSVCSPLPLDEIDDGNPCTDDHCDETTGLITHNITTKCTGCMKCNTTTGSCSPTNNECQDGNECTDNICVAAATNINQGECSNKTVSCPTTDKCLVYTCDTNKGCVSKPVVCPNSGNCQVGVCDSVKGCTLVPRVCNSTAFCLVSQCDEAIGCITFEKRCSPDNSKCQSGVCVNATATEPGKCKSVDYDPKPFICQTGAIVSTAVVASVVVVGAVVLGAAIFAGKKGYDHWKANQGQVFASSNANPLYQQSNNGGENALFEAPQ.

The signal sequence occupies residues methionine 1–serine 19. The Extracellular portion of the chain corresponds to glutamine 20–threonine 658. N-linked (GlcNAc...) asparagine glycans are attached at residues asparagine 62, asparagine 105, asparagine 118, asparagine 151, asparagine 315, asparagine 379, asparagine 454, asparagine 488, asparagine 500, asparagine 538, asparagine 592, and asparagine 629. Residues leucine 119 to aspartate 261 form the PA14 domain. A helical transmembrane segment spans residues alanine 659–glycine 679. The Cytoplasmic portion of the chain corresponds to lysine 680 to glutamine 719.

Belongs to the prespore-cell-inducing factor family.

It localises to the membrane. The polypeptide is Protein psiI (psiI) (Dictyostelium discoideum (Social amoeba)).